Here is a 659-residue protein sequence, read N- to C-terminus: Pesticidal crystal protein Cry3Ba (659 aa).

Positions 1 to 41 (MIRMGGRKMNPNNRSEYDTIKVTPNSELPTNHNQYPLADNP) are disordered. Residues 22–41 (VTPNSELPTNHNQYPLADNP) are compositionally biased toward polar residues.

The protein belongs to the delta endotoxin family.

Promotes colloidosmotic lysis by binding to the midgut epithelial cells of Coleoptera. The polypeptide is Pesticidal crystal protein Cry3Ba (cry3Ba) (Bacillus thuringiensis subsp. tolworthi).